We begin with the raw amino-acid sequence, 90 residues long: U7-theraphotoxin-Hhn1a 3 (90 aa).

The signal sequence occupies residues 1-26; that stretch reads MKTAIFTVVLALAVFAVLSFGWEANG. A propeptide spanning residues 27-50 is cleaved from the precursor; that stretch reads KALSEEFTELIHEKEAASETEARE. Intrachain disulfides connect Cys-51–Cys-65, Cys-58–Cys-70, and Cys-64–Cys-81.

Belongs to the neurotoxin 10 (Hwtx-1) family. 13 (Hntx-13) subfamily. As to expression, expressed by the venom gland.

It localises to the secreted. Its function is as follows. Ion channel inhibitor. The protein is U7-theraphotoxin-Hhn1a 3 of Cyriopagopus hainanus (Chinese bird spider).